Reading from the N-terminus, the 69-residue chain is Putative membrane protein insertion efficiency factor (69 aa).

Belongs to the UPF0161 family.

It is found in the cell membrane. Its function is as follows. Could be involved in insertion of integral membrane proteins into the membrane. The protein is Putative membrane protein insertion efficiency factor of Clostridium beijerinckii (strain ATCC 51743 / NCIMB 8052) (Clostridium acetobutylicum).